The primary structure comprises 241 residues: 1-(5-phosphoribosyl)-5-[(5-phosphoribosylamino)methylideneamino] imidazole-4-carboxamide isomerase (241 aa).

Aspartate 8 functions as the Proton acceptor in the catalytic mechanism. Residue aspartate 130 is the Proton donor of the active site.

The protein belongs to the HisA/HisF family.

The protein resides in the cytoplasm. The enzyme catalyses 1-(5-phospho-beta-D-ribosyl)-5-[(5-phospho-beta-D-ribosylamino)methylideneamino]imidazole-4-carboxamide = 5-[(5-phospho-1-deoxy-D-ribulos-1-ylimino)methylamino]-1-(5-phospho-beta-D-ribosyl)imidazole-4-carboxamide. It participates in amino-acid biosynthesis; L-histidine biosynthesis; L-histidine from 5-phospho-alpha-D-ribose 1-diphosphate: step 4/9. This Flavobacterium psychrophilum (strain ATCC 49511 / DSM 21280 / CIP 103535 / JIP02/86) protein is 1-(5-phosphoribosyl)-5-[(5-phosphoribosylamino)methylideneamino] imidazole-4-carboxamide isomerase.